The chain runs to 341 residues: N-acetyl-gamma-glutamyl-phosphate reductase (341 aa).

Residue C146 is part of the active site.

Belongs to the NAGSA dehydrogenase family. Type 1 subfamily.

It is found in the cytoplasm. It carries out the reaction N-acetyl-L-glutamate 5-semialdehyde + phosphate + NADP(+) = N-acetyl-L-glutamyl 5-phosphate + NADPH + H(+). Its pathway is amino-acid biosynthesis; L-arginine biosynthesis; N(2)-acetyl-L-ornithine from L-glutamate: step 3/4. Catalyzes the NADPH-dependent reduction of N-acetyl-5-glutamyl phosphate to yield N-acetyl-L-glutamate 5-semialdehyde. The protein is N-acetyl-gamma-glutamyl-phosphate reductase of Limosilactobacillus fermentum (strain NBRC 3956 / LMG 18251) (Lactobacillus fermentum).